Reading from the N-terminus, the 274-residue chain is 2,3,4,5-tetrahydropyridine-2,6-dicarboxylate N-succinyltransferase (274 aa).

Substrate is bound by residues Arg104 and Asp141.

The protein belongs to the transferase hexapeptide repeat family. As to quaternary structure, homotrimer.

Its subcellular location is the cytoplasm. The enzyme catalyses (S)-2,3,4,5-tetrahydrodipicolinate + succinyl-CoA + H2O = (S)-2-succinylamino-6-oxoheptanedioate + CoA. Its pathway is amino-acid biosynthesis; L-lysine biosynthesis via DAP pathway; LL-2,6-diaminopimelate from (S)-tetrahydrodipicolinate (succinylase route): step 1/3. In Escherichia coli O127:H6 (strain E2348/69 / EPEC), this protein is 2,3,4,5-tetrahydropyridine-2,6-dicarboxylate N-succinyltransferase.